Reading from the N-terminus, the 258-residue chain is L-aspartate dehydrogenase 1 (258 aa).

Residues alanine 121 and asparagine 181 each coordinate NAD(+). The active site involves histidine 211.

Belongs to the L-aspartate dehydrogenase family.

The enzyme catalyses L-aspartate + NADP(+) + H2O = oxaloacetate + NH4(+) + NADPH + H(+). It catalyses the reaction L-aspartate + NAD(+) + H2O = oxaloacetate + NH4(+) + NADH + H(+). It functions in the pathway cofactor biosynthesis; NAD(+) biosynthesis; iminoaspartate from L-aspartate (dehydrogenase route): step 1/1. Functionally, specifically catalyzes the NAD or NADP-dependent dehydrogenation of L-aspartate to iminoaspartate. The protein is L-aspartate dehydrogenase 1 of Bordetella pertussis (strain Tohama I / ATCC BAA-589 / NCTC 13251).